Consider the following 262-residue polypeptide: MAIVGVPGWIGESAVNETGQRWMDAAMRAVHVSVPGWMSSMAGQSKEIYLSIGANHNYDRNSLINWMRAQGGAPVVITITGDLVSNSTGNACLEFPSDLPNAYIQLIINSGVTVYGRGGNGSTNSSAGGNGGTAIHNAAGTKLRIRNNGAIAGGGGGGGAASLKNSYPTNGSCGGGGGRPFGVGGKIGSDSILSGSNASLTDAGTGGTTFQYGAGNGGNVGAGGGRGWGKNVYTSEGGAAGAAVTGNAPNWQNVGTIYGSRV.

10 short sequence motifs (GRM) span residues 116–123 (GRGGNGST), 126–133 (SAGGNGGT), 153–163 (GGGGGGGAASL), 166–179 (SYPTNGSCGGGGGR), 182–188 (GVGGKIG), 193–199 (LSGSNAS), 201–211 (TDAGTGGTTFQ), 213–219 (GAGNGGN), 222–227 (AGGGRG), and 229–242 (GKNVYTSEGGAAGA).

This sequence belongs to the receptor-recognizing protein gp38 family.

The protein localises to the virion. Receptor binding protein (RBP) that is at the tip of the long tail fibers and serves as the phage recognition site for the attachment host receptor. Probably uses the host receptors OmpF and TTR. The chain is Receptor-recognizing protein gp38 (38) from Enterobacteria phage T2 (Bacteriophage T2).